We begin with the raw amino-acid sequence, 484 residues long: tRNA sulfurtransferase (484 aa).

The THUMP domain occupies 63-167 (QGIRERLSCM…DQRLFVVHDQ (105 aa)). ATP is bound by residues 185–186 (LM), Lys-267, Gly-289, and Gln-298. Cys-346 and Cys-457 are disulfide-bonded. A Rhodanese domain is found at 405–483 (ALAGQVILDI…GHANVRVYRP (79 aa)). The Cysteine persulfide intermediate role is filled by Cys-457.

This sequence belongs to the ThiI family.

It localises to the cytoplasm. It carries out the reaction [ThiI sulfur-carrier protein]-S-sulfanyl-L-cysteine + a uridine in tRNA + 2 reduced [2Fe-2S]-[ferredoxin] + ATP + H(+) = [ThiI sulfur-carrier protein]-L-cysteine + a 4-thiouridine in tRNA + 2 oxidized [2Fe-2S]-[ferredoxin] + AMP + diphosphate. It catalyses the reaction [ThiS sulfur-carrier protein]-C-terminal Gly-Gly-AMP + S-sulfanyl-L-cysteinyl-[cysteine desulfurase] + AH2 = [ThiS sulfur-carrier protein]-C-terminal-Gly-aminoethanethioate + L-cysteinyl-[cysteine desulfurase] + A + AMP + 2 H(+). Its pathway is cofactor biosynthesis; thiamine diphosphate biosynthesis. Catalyzes the ATP-dependent transfer of a sulfur to tRNA to produce 4-thiouridine in position 8 of tRNAs, which functions as a near-UV photosensor. Also catalyzes the transfer of sulfur to the sulfur carrier protein ThiS, forming ThiS-thiocarboxylate. This is a step in the synthesis of thiazole, in the thiamine biosynthesis pathway. The sulfur is donated as persulfide by IscS. This is tRNA sulfurtransferase from Pseudomonas syringae pv. syringae (strain B728a).